The sequence spans 643 residues: uncharacterized protein (643 aa).

Residues 561-643 form a disordered region; that stretch reads LNQELETSSE…GADRKKRGVY (83 aa). Residues 591-606 show a composition bias toward gly residues; that stretch reads SRGGRGGRGARGGNRG. Residues 617–635 are compositionally biased toward basic and acidic residues; that stretch reads GHDRQMKEKHKSDIKQRGA.

This is an uncharacterized protein from Caenorhabditis elegans.